A 199-amino-acid chain; its full sequence is Pyridoxal 5'-phosphate synthase subunit PdxT (199 aa).

Position 51–53 (51–53 (GES)) interacts with L-glutamine. Cysteine 83 acts as the Nucleophile in catalysis. L-glutamine is bound by residues arginine 110 and 137-138 (IR). Active-site charge relay system residues include histidine 172 and glutamate 174.

The protein belongs to the glutaminase PdxT/SNO family. As to quaternary structure, in the presence of PdxS, forms a dodecamer of heterodimers. Only shows activity in the heterodimer.

The catalysed reaction is aldehydo-D-ribose 5-phosphate + D-glyceraldehyde 3-phosphate + L-glutamine = pyridoxal 5'-phosphate + L-glutamate + phosphate + 3 H2O + H(+). It catalyses the reaction L-glutamine + H2O = L-glutamate + NH4(+). The protein operates within cofactor biosynthesis; pyridoxal 5'-phosphate biosynthesis. Catalyzes the hydrolysis of glutamine to glutamate and ammonia as part of the biosynthesis of pyridoxal 5'-phosphate. The resulting ammonia molecule is channeled to the active site of PdxS. In Thermoplasma volcanium (strain ATCC 51530 / DSM 4299 / JCM 9571 / NBRC 15438 / GSS1), this protein is Pyridoxal 5'-phosphate synthase subunit PdxT.